The following is a 1493-amino-acid chain: Protein Shroom4 (1493 aa).

One can recognise a PDZ domain in the interval 10–92 (YVPVQLQGGA…ILKLIVRRRN (83 aa)). Positions 202–282 (CALSLRPEEP…PPQPPVRRDS (81 aa)) are disordered. Composition is skewed to polar residues over residues 234 to 243 (AETSGGSRRT) and 249 to 262 (TPSS…QEGY). A Phosphoserine modification is found at Ser411. The disordered stretch occupies residues 430–695 (GSKGMELPPV…SPGQRPGQSS (266 aa)). Basic and acidic residues-rich tracts occupy residues 470 to 484 (QSSK…DDRS) and 498 to 509 (GEADGHPSEKGF). Over residues 513 to 547 (NRTSRAASELANQQPSASGSLVQQATDCSSTTKAA) the composition is skewed to polar residues. Phosphoserine is present on Ser729. 2 disordered regions span residues 740–759 (AAME…ASTA) and 781–813 (SKSL…NFQP). Over residues 782–802 (KSLSTSHLPGLTTHSNKTFTQ) the composition is skewed to polar residues. Ser1019 bears the Phosphoserine mark. 4 disordered regions span residues 1117–1170 (AAQQ…ETSG), 1187–1206 (SFGH…AEQE), 1214–1236 (DFLP…PCYY), and 1246–1265 (GQEA…PPSG). Over residues 1118-1129 (AQQQKQQQQQQK) the composition is skewed to low complexity. A compositionally biased stretch (acidic residues) spans 1132-1159 (EEEEEEEEEEEEEEEEEEEEAEEEEEEL). The ASD2 domain occupies 1213-1492 (SDFLPPIRGH…RESLLLGPSN (280 aa)). The stretch at 1382–1488 (LSGRLARVEN…LKCLRESLLL (107 aa)) forms a coiled coil.

This sequence belongs to the shroom family. Interacts directly with F-actin. In terms of tissue distribution, expressed in all fetal and adult tissues investigated. Expressed in adult heart, brain, placenta, lung, liver, skeletal muscle, kidney and pancreas. In brain regions detected in cerebellum, cerebral cortex, medulla, spinal cord, occipital pole, frontal lobe, temporal lobe and putamen. The expression is strongest in the medulla and weakest in the cerebral cortex.

It localises to the cytoplasm. The protein localises to the cytoskeleton. In terms of biological role, probable regulator of cytoskeletal architecture that plays an important role in development. May regulate cellular and cytoskeletal architecture by modulating the spatial distribution of myosin II. The polypeptide is Protein Shroom4 (SHROOM4) (Homo sapiens (Human)).